A 92-amino-acid chain; its full sequence is Small ribosomal subunit protein uS19c (92 aa).

Belongs to the universal ribosomal protein uS19 family.

The protein resides in the plastid. Its subcellular location is the chloroplast. Its function is as follows. Protein S19 forms a complex with S13 that binds strongly to the 16S ribosomal RNA. This is Small ribosomal subunit protein uS19c from Cucumis sativus (Cucumber).